Reading from the N-terminus, the 90-residue chain is Small ribosomal subunit protein bS20 (90 aa).

The disordered stretch occupies residues 1–21 (MANHKSALKRVRQTKKRTERN).

Belongs to the bacterial ribosomal protein bS20 family.

In terms of biological role, binds directly to 16S ribosomal RNA. The polypeptide is Small ribosomal subunit protein bS20 (Nitratiruptor sp. (strain SB155-2)).